Reading from the N-terminus, the 163-residue chain is Nucleotide-binding protein BPUM_1028 (163 aa).

Belongs to the YajQ family.

Functionally, nucleotide-binding protein. The sequence is that of Nucleotide-binding protein BPUM_1028 from Bacillus pumilus (strain SAFR-032).